Here is a 1162-residue protein sequence, read N- to C-terminus: Glycerophosphocholine phosphodiesterase GDE1 (1162 aa).

The SPX domain maps to 1-155 (MKFGKTYVTH…TSILSQHSGV (155 aa)). ANK repeat units follow at residues 346 to 375 (YHRTPLHYASQYGLVEVTRYLVEFGVKWGL), 392 to 421 (EGLTPLHLSIIGKHPKTTETLLGFNKAQTL), 423 to 452 (CPNLLLLAVRLNSPQILNSLIVEGNIDVNY), 458 to 487 (RNETALYIASKLNHPDLVEFLLESNANTEI), 492 to 521 (FGWTPIFIAASEGFMTIVKLLKEYGASYDI), and 525 to 554 (SGWLPMEHACLRGHLDVTDLLLPKNEKLLL). The 330-residue stretch at 817–1146 (TRVIGHRGLG…DSVLAVREGL (330 aa)) folds into the GP-PDE domain.

The protein belongs to the GDE1 family.

The protein resides in the cytoplasm. The enzyme catalyses sn-glycerol 3-phosphocholine + H2O = sn-glycerol 3-phosphate + choline + H(+). Glycerophosphocholine glycerophosphodiesterase responsible for the hydrolysis of intracellular glycerophosphocholine into glycerol-phosphate and choline. The choline is used for phosphatidyl-choline synthesis. Required for utilization of glycerophosphocholine as phosphate source. C.albicans can utilize GroPCho through transport and intracellular hydrolysis or through extracellular hydrolysis. The chain is Glycerophosphocholine phosphodiesterase GDE1 from Candida albicans (strain SC5314 / ATCC MYA-2876) (Yeast).